Reading from the N-terminus, the 42-residue chain is Photosystem I reaction center subunit IX (42 aa).

A helical membrane pass occupies residues 8–28 (YLSTIPVVGAIWLTFTAGFII).

The protein belongs to the PsaJ family.

It is found in the plastid. It localises to the chloroplast thylakoid membrane. In terms of biological role, may help in the organization of the PsaE and PsaF subunits. This chain is Photosystem I reaction center subunit IX, found in Gracilaria tenuistipitata var. liui (Red alga).